The sequence spans 41 residues: Photosystem I reaction center subunit IX (41 aa).

The helical transmembrane segment at 7 to 27 (YLSTAPVVAAAWFTFTAGLLI) threads the bilayer.

This sequence belongs to the PsaJ family.

The protein localises to the plastid. It localises to the chloroplast thylakoid membrane. May help in the organization of the PsaE and PsaF subunits. The protein is Photosystem I reaction center subunit IX of Oltmannsiellopsis viridis (Marine flagellate).